The primary structure comprises 181 residues: Major urinary protein (181 aa).

The N-terminal stretch at 1–19 (MKLLLLLLCLGLTLVCGHA) is a signal peptide. Residue N54 is glycosylated (N-linked (GlcNAc...) asparagine). Cysteines 83 and 176 form a disulfide.

It belongs to the calycin superfamily. Lipocalin family. In terms of tissue distribution, abundant in the urine of adult male rats but absent from that of females.

Its subcellular location is the cytoplasm. The protein resides in the cytosol. The protein localises to the secreted. Its function is as follows. Major urinary proteins (Mups) bind and release pheromones. They may also protect pheromones from oxidation. In this context, they play a role in the regulation of social behaviors, such as aggression, mating, pup-suckling, territory establishment and dominance. Acts as a kairomone, detected by the prey vomeronasal organ and inducing fear reactions in mice. This chain is Major urinary protein, found in Rattus norvegicus (Rat).